The primary structure comprises 306 residues: MRFRQLLPLFGALFALYIIWGSTYFVIRIGVESWPPLMMAGVRFLAAGILLLAFLLLRGHKLPPLRPLLNAALIGLLLLAVGNGMVTVAEHQNVPSGIAAVVVATVPLFTLCFSRLFGIKTRKLEWVGIAIGLAGIIMLNSGGNLSGNPWGAILILIGSISWAFGSVYGSRITLPVGMMAGAIEMLAAGVVLMIASMIAGEKLTALPSLSGFLAVGYLALFGSIIAINAYMYLIRNVSPALATSYAYVNPVVAVLLGTGLGGETLSKIEWLALGVIVFAVVLVTLGKYLFPAKPVVAPVIQDASSE.

Over 1–6 the chain is Cytoplasmic; it reads MRFRQL. A helical transmembrane segment spans residues 7-27; that stretch reads LPLFGALFALYIIWGSTYFVI. The EamA 1 domain maps to 18–141; that stretch reads IIWGSTYFVI…GLAGIIMLNS (124 aa). The Periplasmic portion of the chain corresponds to 28-36; sequence RIGVESWPP. Residues 37–57 form a helical membrane-spanning segment; it reads LMMAGVRFLAAGILLLAFLLL. Over 58–67 the chain is Cytoplasmic; it reads RGHKLPPLRP. Residues 68–88 form a helical membrane-spanning segment; that stretch reads LLNAALIGLLLLAVGNGMVTV. Residues 89–93 lie on the Periplasmic side of the membrane; sequence AEHQN. Residues 94-114 form a helical membrane-spanning segment; the sequence is VPSGIAAVVVATVPLFTLCFS. Over 115-125 the chain is Cytoplasmic; the sequence is RLFGIKTRKLE. The helical transmembrane segment at 126 to 146 threads the bilayer; it reads WVGIAIGLAGIIMLNSGGNLS. Residues 147–148 lie on the Periplasmic side of the membrane; the sequence is GN. Residues 149–169 traverse the membrane as a helical segment; the sequence is PWGAILILIGSISWAFGSVYG. In terms of domain architecture, EamA 2 spans 160–285; the sequence is ISWAFGSVYG…IVFAVVLVTL (126 aa). Over 170-173 the chain is Cytoplasmic; sequence SRIT. A helical transmembrane segment spans residues 174–194; sequence LPVGMMAGAIEMLAAGVVLMI. The Periplasmic portion of the chain corresponds to 195-206; that stretch reads ASMIAGEKLTAL. Residues 207–227 form a helical membrane-spanning segment; the sequence is PSLSGFLAVGYLALFGSIIAI. Over 228 to 239 the chain is Cytoplasmic; sequence NAYMYLIRNVSP. The helical transmembrane segment at 240–260 threads the bilayer; sequence ALATSYAYVNPVVAVLLGTGL. Over 261 to 269 the chain is Periplasmic; the sequence is GGETLSKIE. A helical membrane pass occupies residues 270 to 290; the sequence is WLALGVIVFAVVLVTLGKYLF. Residues 291–306 lie on the Cytoplasmic side of the membrane; sequence PAKPVVAPVIQDASSE.

Belongs to the EamA transporter family.

The protein resides in the cell inner membrane. This is an uncharacterized protein from Escherichia coli O157:H7.